The primary structure comprises 639 residues: Probable endo-1,3(4)-beta-glucanase ACLA_073210 (639 aa).

The N-terminal stretch at 1–21 is a signal peptide; sequence MAPSSLLLSVGSLIASSLASA. In terms of domain architecture, GH16 spans 26-290; sequence IREQSQSYQL…WAGNVFGESG (265 aa). N65 carries N-linked (GlcNAc...) asparagine glycosylation. E146 acts as the Nucleophile in catalysis. E151 acts as the Proton donor in catalysis. 2 disordered regions span residues 337 to 384 and 442 to 545; these read TVAS…TVAE and QSSS…GSSI. Residues 339-348 are compositionally biased toward polar residues; it reads ASPNTASEVH. Low complexity-rich tracts occupy residues 362–376 and 478–488; these read PTVP…VPPA and TTTEAVAETET. A lipid anchor (GPI-anchor amidated alanine) is attached at A617. Positions 618-639 are cleaved as a propeptide — removed in mature form; the sequence is GARKLSVGLSGLVGALAVAALA.

This sequence belongs to the glycosyl hydrolase 16 family.

It is found in the cell membrane. The enzyme catalyses Endohydrolysis of (1-&gt;3)- or (1-&gt;4)-linkages in beta-D-glucans when the glucose residue whose reducing group is involved in the linkage to be hydrolyzed is itself substituted at C-3.. Mixed-linked glucanase involved in the degradation of complex natural cellulosic substrates. In Aspergillus clavatus (strain ATCC 1007 / CBS 513.65 / DSM 816 / NCTC 3887 / NRRL 1 / QM 1276 / 107), this protein is Probable endo-1,3(4)-beta-glucanase ACLA_073210.